The following is a 344-amino-acid chain: Glyceraldehyde-3-phosphate dehydrogenase (344 aa).

Residues 11–12 (TI) and Gly110 each bind NAD(+). 139–141 (SCN) lines the D-glyceraldehyde 3-phosphate pocket. The Nucleophile role is filled by Cys140. An NAD(+)-binding site is contributed by Arg169. Residue 195 to 196 (HG) participates in D-glyceraldehyde 3-phosphate binding. Gln302 is an NAD(+) binding site.

It belongs to the glyceraldehyde-3-phosphate dehydrogenase family. Homotetramer.

Its subcellular location is the cytoplasm. It carries out the reaction D-glyceraldehyde 3-phosphate + phosphate + NADP(+) = (2R)-3-phospho-glyceroyl phosphate + NADPH + H(+). The enzyme catalyses D-glyceraldehyde 3-phosphate + phosphate + NAD(+) = (2R)-3-phospho-glyceroyl phosphate + NADH + H(+). The protein operates within carbohydrate degradation; glycolysis; pyruvate from D-glyceraldehyde 3-phosphate: step 1/5. This chain is Glyceraldehyde-3-phosphate dehydrogenase, found in Pyrobaculum calidifontis (strain DSM 21063 / JCM 11548 / VA1).